Reading from the N-terminus, the 208-residue chain is A-type ATP synthase subunit E (208 aa).

The segment at 37 to 57 (DAEKTAEAEKNKILDNGKKQS) is disordered.

The protein belongs to the V-ATPase E subunit family. In terms of assembly, has multiple subunits with at least A(3), B(3), C, D, E, F, H, I and proteolipid K(x).

Its subcellular location is the cell membrane. Component of the A-type ATP synthase that produces ATP from ADP in the presence of a proton gradient across the membrane. In Methanobrevibacter smithii (strain ATCC 35061 / DSM 861 / OCM 144 / PS), this protein is A-type ATP synthase subunit E.